The chain runs to 146 residues: Large ribosomal subunit protein uL15 (146 aa).

The segment at 1-52 is disordered; that stretch reads MKLSNLSPKAGSKKRRRRVGRGIAAGQGASCGFGMRGQKSRSGTGTKAGFEG. Basic residues predominate over residues 11–20; sequence GSKKRRRRVG. The span at 23–35 shows a compositional bias: gly residues; the sequence is IAAGQGASCGFGM.

It belongs to the universal ribosomal protein uL15 family. As to quaternary structure, part of the 50S ribosomal subunit.

Binds to the 23S rRNA. This is Large ribosomal subunit protein uL15 from Picosynechococcus sp. (strain ATCC 27264 / PCC 7002 / PR-6) (Agmenellum quadruplicatum).